A 599-amino-acid polypeptide reads, in one-letter code: PR domain zinc finger protein 5 (599 aa).

In terms of domain architecture, SET spans 8 to 124 (DRFALKSSRV…TDTELLIGYL (117 aa)). 12 consecutive C2H2-type zinc fingers follow at residues 167–190 (FACP…QSLH), 199–221 (FKCE…FEQH), 231–256 (FVCK…ENVH), 264–286 (LICS…RKIH), 289–311 (FDCQ…MITH), 317–339 (YNCE…KVIH), 345–367 (YQCK…KKTH), 373–395 (FQCD…LLIH), 401–424 (FKCH…QVVH), 430–452 (YRCE…KKTH), 458–480 (KVCP…IRSH), and 486–508 (YQCP…IRTH). A C2H2-type 13; degenerate zinc finger spans residues 514-536 (YQCSECSKAFSQKRGLDEHKRTH). 2 consecutive C2H2-type zinc fingers follow at residues 542–564 (FQCD…KMTH) and 571–594 (AECH…DNIH).

It belongs to the class V-like SAM-binding methyltransferase superfamily. Interacts with EHMT2/G9A, GFI1 and HDAC1.

The protein localises to the nucleus. Sequence-specific DNA-binding transcription factor. Represses transcription at least in part by recruitment of the histone methyltransferase EHMT2/G9A and histone deacetylases such as HDAC1. Regulates hematopoiesis-associated protein-coding and microRNA (miRNA) genes. May regulate the expression of proteins involved in extracellular matrix development and maintenance, connective tissue components and molecules regulating cell migration and adhesion. May cause G2/M arrest and apoptosis in cancer cells. This Mus musculus (Mouse) protein is PR domain zinc finger protein 5 (Prdm5).